A 320-amino-acid polypeptide reads, in one-letter code: Nod factor export ATP-binding protein I (320 aa).

Residues 15–245 (VSATGVWKKR…LGALKILEID (231 aa)) enclose the ABC transporter domain. 47–54 (GTNGAGKS) contributes to the ATP binding site.

This sequence belongs to the ABC transporter superfamily. Lipooligosaccharide exporter (TC 3.A.1.102) family. In terms of assembly, the complex is composed of two ATP-binding proteins (NodI) and two transmembrane proteins (NodJ).

It is found in the cell inner membrane. In terms of biological role, part of the ABC transporter complex NodIJ involved in the export of the nodulation factors (Nod factors), the bacterial signal molecules that induce symbiosis and subsequent nodulation induction. Nod factors are LCO (lipo-chitin oligosaccharide), a modified beta-1,4-linked N-acetylglucosamine oligosaccharide. This subunit is responsible for energy coupling to the transport system. The protein is Nod factor export ATP-binding protein I of Azorhizobium caulinodans (strain ATCC 43989 / DSM 5975 / JCM 20966 / LMG 6465 / NBRC 14845 / NCIMB 13405 / ORS 571).